We begin with the raw amino-acid sequence, 488 residues long: Proline--tRNA ligase (488 aa).

It belongs to the class-II aminoacyl-tRNA synthetase family. ProS type 3 subfamily. Homodimer.

It is found in the cytoplasm. It catalyses the reaction tRNA(Pro) + L-proline + ATP = L-prolyl-tRNA(Pro) + AMP + diphosphate. Functionally, catalyzes the attachment of proline to tRNA(Pro) in a two-step reaction: proline is first activated by ATP to form Pro-AMP and then transferred to the acceptor end of tRNA(Pro). This chain is Proline--tRNA ligase, found in Pyrobaculum aerophilum (strain ATCC 51768 / DSM 7523 / JCM 9630 / CIP 104966 / NBRC 100827 / IM2).